The following is a 734-amino-acid chain: Transcriptional regulator AacuB (734 aa).

Positions 26–52 form a DNA-binding region, zn(2)-C6 fungal-type; that stretch reads CVLCQQRKIKCDRTFPCTNCVRAHVQC. The segment covering 86–107 has biased composition (basic and acidic residues); it reads FDPLHTPTADHRSASDDGRDDL. Positions 86–122 are disordered; the sequence is FDPLHTPTADHRSASDDGRDDLPEGAESEGTFGEREK.

Its subcellular location is the nucleus. Transcriptional regulator; part of the gene cluster that mediates the biosynthesis of the tetrahydroxanthone dimer secalonic acid D. The polypeptide is Transcriptional regulator AacuB (Aspergillus aculeatus (strain ATCC 16872 / CBS 172.66 / WB 5094)).